The sequence spans 105 residues: METKRLAYVMFVLVCLFLAMAQPSQASYFSAWAGPGCNNHNARYSKCGCSNIGHNVHGGYEFVYQGQTAAAYNTDNCKGVAQTRFSSSVNQACSNFGWKSVFIQC.

An N-terminal signal peptide occupies residues 1 to 26 (METKRLAYVMFVLVCLFLAMAQPSQA). Cystine bridges form between Cys-37–Cys-93, Cys-47–Cys-105, and Cys-49–Cys-77.

In terms of tissue distribution, detected at higher levels in needles and twigs from canker-resistant seedlings than in needles from canker-susceptible plants. During summer, detected on cankered, healthy and marginal bark. During winter, detected at lower levels in cankered bark and bark from the canker margin than in healthy bark (at protein level).

Its subcellular location is the secreted. It localises to the cell wall. Antimicrobial peptide. This is Antimicrobial peptide 1 from Pinus monticola (Western white pine).